The sequence spans 185 residues: Lysozyme g (185 aa).

The active site involves E73.

Belongs to the glycosyl hydrolase 23 family.

It carries out the reaction Hydrolysis of (1-&gt;4)-beta-linkages between N-acetylmuramic acid and N-acetyl-D-glucosamine residues in a peptidoglycan and between N-acetyl-D-glucosamine residues in chitodextrins.. In Cyprinus carpio (Common carp), this protein is Lysozyme g.